Reading from the N-terminus, the 496-residue chain is Glycerol kinase (496 aa).

T12 is a binding site for ADP. Positions 12, 13, and 14 each coordinate ATP. Residue T12 participates in sn-glycerol 3-phosphate binding. Residue R16 coordinates ADP. Residues R82, E83, and Y134 each coordinate sn-glycerol 3-phosphate. R82, E83, and Y134 together coordinate glycerol. Residue H230 is modified to Phosphohistidine; by HPr. Position 244 (D244) interacts with sn-glycerol 3-phosphate. Positions 244 and 245 each coordinate glycerol. Positions 266 and 309 each coordinate ADP. ATP contacts are provided by T266, G309, Q313, and G410. ADP is bound by residues G410 and N414.

The protein belongs to the FGGY kinase family. In terms of assembly, homotetramer and homodimer (in equilibrium). Post-translationally, the phosphoenolpyruvate-dependent sugar phosphotransferase system (PTS), including enzyme I, and histidine-containing protein (HPr) are required for the phosphorylation, which leads to the activation of the enzyme.

The enzyme catalyses glycerol + ATP = sn-glycerol 3-phosphate + ADP + H(+). Its pathway is polyol metabolism; glycerol degradation via glycerol kinase pathway; sn-glycerol 3-phosphate from glycerol: step 1/1. With respect to regulation, activated by phosphorylation and inhibited by fructose 1,6-bisphosphate (FBP). In terms of biological role, key enzyme in the regulation of glycerol uptake and metabolism. Catalyzes the phosphorylation of glycerol to yield sn-glycerol 3-phosphate. The polypeptide is Glycerol kinase (Bacillus cereus (strain G9842)).